The chain runs to 30 residues: ARICPRILMKCKKDSDCLAECICEEHGFCG.

Cystine bridges form between C4-C21, C11-C23, and C17-C29.

The protein belongs to the protease inhibitor I7 (squash-type serine protease inhibitor) family.

The protein localises to the secreted. Its function is as follows. Strongly inhibits trypsin, weakly inhibits chymotrypsin. The protein is Trypsin inhibitor 6 of Cyclanthera pedata (Achocha).